Consider the following 596-residue polypeptide: Chaperone protein DnaK (596 aa).

T180 carries the phosphothreonine; by autocatalysis modification.

It belongs to the heat shock protein 70 family.

Its function is as follows. Acts as a chaperone. The chain is Chaperone protein DnaK from Thermosipho melanesiensis (strain DSM 12029 / CIP 104789 / BI429).